The chain runs to 434 residues: Iron transporter MagA (434 aa).

The next 10 helical transmembrane spans lie at 6–26 (PELTYAAIVALAAVLCGGMMT), 31–51 (PAVVGYILAGVVLGPSGFGLV), 56–76 (AVATLAEFGVLMLLFVIGMKL), 86–106 (KTAIFTTVLQIAGSVGTALLL), 113–133 (SLGLAVVLGCAVAVSSTAVVI), 176–196 (LLPADMARVVLSVLFLVLLFW), 269–289 (SVLLMVFFLSIGLLLDFKFIW), 294–314 (TVLTLLAMVTLFKTALNVTAL), 321–341 (WPSAFLAGVALAQIGEFSFLL), and 357–377 (KLVVAVTVLSLVLSPFWLFTM).

This sequence belongs to the monovalent cation:proton antiporter 2 (CPA2) transporter (TC 2.A.37) family.

It localises to the membrane. Functionally, iron transporter, which is required for the synthesis of bacterial magnetic particles (BMPs). Probably involved in the transport of iron from the environment into the cytoplasm across the cell membrane, and then from the cytoplasm into the BMP lipid vesicle across the BMP membrane. This Paramagnetospirillum magneticum (strain ATCC 700264 / AMB-1) (Magnetospirillum magneticum) protein is Iron transporter MagA (magA).